A 139-amino-acid polypeptide reads, in one-letter code: Large ribosomal subunit protein uL16 (139 aa).

Residues 1–20 (MLIPRRVKHRKQHHPKRRGM) show a composition bias toward basic residues. Residues 1–22 (MLIPRRVKHRKQHHPKRRGMAK) are disordered.

Belongs to the universal ribosomal protein uL16 family. Part of the 50S ribosomal subunit.

Its function is as follows. Binds 23S rRNA and is also seen to make contacts with the A and possibly P site tRNAs. The sequence is that of Large ribosomal subunit protein uL16 from Streptomyces coelicolor (strain ATCC BAA-471 / A3(2) / M145).